We begin with the raw amino-acid sequence, 80 residues long: MAKHLIVMFLVIMVISSLVDCAKKPFVQRVKNAASKAYNKLKGLAMQSQYGCPIISNMCEDHCRRKKMEGQCDLLDCVCS.

The N-terminal stretch at 1–21 is a signal peptide; sequence MAKHLIVMFLVIMVISSLVDC. The 32-residue stretch at 49 to 80 folds into the BetaSPN-type CS-alpha/beta domain; it reads QYGCPIISNMCEDHCRRKKMEGQCDLLDCVCS. Cystine bridges form between Cys52–Cys72, Cys59–Cys77, and Cys63–Cys79.

The protein belongs to the long chain scorpion toxin family. Class 2 subfamily. Expressed by the venom gland.

It localises to the secreted. Dual-function toxin that acts both as an insecticidal and an antimicrobial peptide. May inhibit voltage-gated potassium channels (Kv). This amphipathic peptide causes significant antimicrobial activity against E.coli (MIC=7 uM) but does not show any activity against S.aureus even at high concentration. In vivo, causes paralysis or death to crickets. In Liocheles australasiae (Dwarf wood scorpion), this protein is Peptide LaIT2.